The chain runs to 217 residues: UPF0502 protein ASA_1460 (217 aa).

This sequence belongs to the UPF0502 family.

In Aeromonas salmonicida (strain A449), this protein is UPF0502 protein ASA_1460.